A 384-amino-acid chain; its full sequence is MSWQEKINAALDARRAADALRRRYPVAQGAGRWLVADDRQYLNFSCNDYLGLSHHPDIIRAWKQGAEQFGVGSGGSGHVSGYSVAHQALEEELAEWLGYSRALLFISGFAANQAVITAMTAKEDRIVADRLSHASLLEAASLSPAQLRRFTHNDVAHLARLLASPCPGQQLVVTEGVFSMDGDSAPLAEIQQVTQQHNGWLMVDDAHGTGVIGEQGRGSCWLQKVNPELLVVTFGKGFGVSGAAVLCSDAVADYLLQFARHLIYSTSMPPAQAQALRASLAVIRSDEGDARREKLAALITRFRAGVQDLPFTLADSCSAIQPLIVGDNSRALQLAEKLRQQGCWVTAIRPPTVPAGTARLRLTLTAAHEMQDIDRLLEVLHGNG.

Arg-21 is a substrate binding site. Gly-108–Phe-109 provides a ligand contact to pyridoxal 5'-phosphate. His-133 contributes to the substrate binding site. Pyridoxal 5'-phosphate is bound by residues Ser-179, His-207, and Thr-233. Position 236 is an N6-(pyridoxal phosphate)lysine (Lys-236). Thr-352 contributes to the substrate binding site.

This sequence belongs to the class-II pyridoxal-phosphate-dependent aminotransferase family. BioF subfamily. In terms of assembly, homodimer. Pyridoxal 5'-phosphate serves as cofactor.

The catalysed reaction is 6-carboxyhexanoyl-[ACP] + L-alanine + H(+) = (8S)-8-amino-7-oxononanoate + holo-[ACP] + CO2. The protein operates within cofactor biosynthesis; biotin biosynthesis. In terms of biological role, catalyzes the decarboxylative condensation of pimeloyl-[acyl-carrier protein] and L-alanine to produce 8-amino-7-oxononanoate (AON), [acyl-carrier protein], and carbon dioxide. This chain is 8-amino-7-oxononanoate synthase, found in Escherichia coli O17:K52:H18 (strain UMN026 / ExPEC).